A 237-amino-acid chain; its full sequence is tRNA (guanine-N(7)-)-methyltransferase (237 aa).

4 residues coordinate S-adenosyl-L-methionine: Asp35, Glu60, Asn87, and Asp113. The active site involves Asp113. Residues Lys117 and Asp149 each contribute to the substrate site.

Belongs to the class I-like SAM-binding methyltransferase superfamily. TrmB family.

The catalysed reaction is guanosine(46) in tRNA + S-adenosyl-L-methionine = N(7)-methylguanosine(46) in tRNA + S-adenosyl-L-homocysteine. It participates in tRNA modification; N(7)-methylguanine-tRNA biosynthesis. Catalyzes the formation of N(7)-methylguanine at position 46 (m7G46) in tRNA. In Synechococcus sp. (strain WH7803), this protein is tRNA (guanine-N(7)-)-methyltransferase.